The primary structure comprises 239 residues: MRYTVITLFPNLVRPWLEESLLKKALERGLIQVEVVDLRAFGLGRHRTVDDTPYGGGAGMVIRPDVAVAALERALPADEVVLLSPAGRPFTQKVAEELAGKEHLVLLAGRYEGFDARVEAFATRILSIGDYVLMGGEVAALAVLEATARLVPGVIGDPQSHREDSFVRGLLDYPQYTRPPEFRGLRVPEVLLSGHHQEVERWRRQEALRRTLALRPELVARAPLSLLEARLLAEMDREE.

S-adenosyl-L-methionine is bound by residues G109 and 128–133 (IGDYVL).

The protein belongs to the RNA methyltransferase TrmD family. Homodimer.

The protein localises to the cytoplasm. It carries out the reaction guanosine(37) in tRNA + S-adenosyl-L-methionine = N(1)-methylguanosine(37) in tRNA + S-adenosyl-L-homocysteine + H(+). In terms of biological role, specifically methylates guanosine-37 in various tRNAs. In Thermus thermophilus (strain ATCC BAA-163 / DSM 7039 / HB27), this protein is tRNA (guanine-N(1)-)-methyltransferase.